We begin with the raw amino-acid sequence, 358 residues long: UDP-N-acetylglucosamine--N-acetylmuramyl-(pentapeptide) pyrophosphoryl-undecaprenol N-acetylglucosamine transferase (358 aa).

UDP-N-acetyl-alpha-D-glucosamine-binding positions include 11–13 (TGG), Asn120, Arg161, Ser188, and Gln282.

It belongs to the glycosyltransferase 28 family. MurG subfamily.

It is found in the cell inner membrane. It carries out the reaction di-trans,octa-cis-undecaprenyl diphospho-N-acetyl-alpha-D-muramoyl-L-alanyl-D-glutamyl-meso-2,6-diaminopimeloyl-D-alanyl-D-alanine + UDP-N-acetyl-alpha-D-glucosamine = di-trans,octa-cis-undecaprenyl diphospho-[N-acetyl-alpha-D-glucosaminyl-(1-&gt;4)]-N-acetyl-alpha-D-muramoyl-L-alanyl-D-glutamyl-meso-2,6-diaminopimeloyl-D-alanyl-D-alanine + UDP + H(+). It functions in the pathway cell wall biogenesis; peptidoglycan biosynthesis. In terms of biological role, cell wall formation. Catalyzes the transfer of a GlcNAc subunit on undecaprenyl-pyrophosphoryl-MurNAc-pentapeptide (lipid intermediate I) to form undecaprenyl-pyrophosphoryl-MurNAc-(pentapeptide)GlcNAc (lipid intermediate II). This chain is UDP-N-acetylglucosamine--N-acetylmuramyl-(pentapeptide) pyrophosphoryl-undecaprenol N-acetylglucosamine transferase, found in Synechococcus sp. (strain WH7803).